A 206-amino-acid polypeptide reads, in one-letter code: 2,3-bisphosphoglycerate-dependent phosphoglycerate mutase (206 aa).

Substrate is bound by residues 9–16, 22–23, Arg-61, 88–91, Lys-99, 115–116, and 159–160; these read RHGQSEWN, TG, ERDY, RR, and GN. Catalysis depends on His-10, which acts as the Tele-phosphohistidine intermediate. Glu-88 functions as the Proton donor/acceptor in the catalytic mechanism.

Belongs to the phosphoglycerate mutase family. BPG-dependent PGAM subfamily. In terms of assembly, homodimer.

It carries out the reaction (2R)-2-phosphoglycerate = (2R)-3-phosphoglycerate. It participates in carbohydrate degradation; glycolysis; pyruvate from D-glyceraldehyde 3-phosphate: step 3/5. In terms of biological role, catalyzes the interconversion of 2-phosphoglycerate and 3-phosphoglycerate. This chain is 2,3-bisphosphoglycerate-dependent phosphoglycerate mutase, found in Brucella anthropi (strain ATCC 49188 / DSM 6882 / CCUG 24695 / JCM 21032 / LMG 3331 / NBRC 15819 / NCTC 12168 / Alc 37) (Ochrobactrum anthropi).